Here is a 310-residue protein sequence, read N- to C-terminus: MKITVIGAGHVGATAAHRIAEQQLANTVVLFDILEGIPQGKALDMYESGPVGLFDTKVYGTTDYNDTADSDIILITAGMARKPGMSREDLLMKNATIVKEVTDQVVRFSKNPIIIMVSNPLDIMTHVGYIRSKLPKERVLGMAGVLDSARFRSFIAEELNVSMRDINAFVLGGHGDSMVPVVKYTSVAGIPLTELMAQDTIEQLVDRTRKGGAEIVNYLKNGSAYYAPASSAVEMIDAIVNDRKRILPCSALLEGQYGINNVYIGAPVKLGKNGIEQILEIDLDAPELDALRKSAAIVEENCNNLASLLA.

NAD(+) is bound by residues 7 to 12 and Asp-32; that span reads GAGHVG. 2 residues coordinate substrate: Arg-81 and Arg-87. Residues Asn-94 and 117–119 each bind NAD(+); that span reads VSN. Substrate-binding residues include Asn-119 and Arg-150. The Proton acceptor role is filled by His-174.

The protein belongs to the LDH/MDH superfamily. MDH type 3 family.

It catalyses the reaction (S)-malate + NAD(+) = oxaloacetate + NADH + H(+). Catalyzes the reversible oxidation of malate to oxaloacetate. This chain is Malate dehydrogenase, found in Chlorobium phaeobacteroides (strain BS1).